Here is a 2280-residue protein sequence, read N- to C-terminus: Metacaspase-3 (2280 aa).

Disordered stretches follow at residues 56–83 (ILSKGKKNKNENIKKRINEKDNDTDRED), 202–284 (YSTE…THRG), 791–819 (YKNSMNSNDDIQNSNNNNNNNNNNNMVNN), 931–954 (DDNSVQDSFFSRTERSNSQNRYDK), 994–1015 (SGKYQRNIPQNDDNDHNDDDSE), 1278–1306 (KTNNKTNSNYSSNNNNDNNNNNNNSNPFI), and 1469–1500 (KAPTNVKAPTNVKAPTNVNAPTNVNAPTNANA). A compositionally biased stretch (basic and acidic residues) spans 63–83 (NKNENIKKRINEKDNDTDRED). Polar residues-rich tracts occupy residues 205–219 (EHTQSIDNNNITSKR) and 228–278 (DKAQ…NRKG). Low complexity-rich tracts occupy residues 793 to 819 (NSMNSNDDIQNSNNNNNNNNNNNMVNN) and 931 to 941 (DDNSVQDSFFS). 2 stretches are compositionally biased toward low complexity: residues 1278-1303 (KTNNKTNSNYSSNNNNDNNNNNNNSN) and 1482-1500 (APTNVNAPTNVNAPTNANA).

This sequence belongs to the peptidase C14B family.

Protease that cleaves specifically after arginine or lysine residues. The protein is Metacaspase-3 of Plasmodium falciparum (isolate 3D7).